Reading from the N-terminus, the 723-residue chain is Phenylalanine ammonia-lyase (723 aa).

Tyr-77 serves as the catalytic Proton donor/acceptor. Positions 182–184 (ASG) form a cross-link, 5-imidazolinone (Ala-Gly). 2,3-didehydroalanine (Ser) is present on Ser-183. Residues Asn-241, Gln-336, Arg-342, Asn-372, Lys-443, Glu-471, and Asn-474 each contribute to the (E)-cinnamate site.

Belongs to the PAL/histidase family. In terms of processing, contains an active site 4-methylidene-imidazol-5-one (MIO), which is formed autocatalytically by cyclization and dehydration of residues Ala-Ser-Gly.

The protein resides in the cytoplasm. The catalysed reaction is L-phenylalanine = (E)-cinnamate + NH4(+). Its pathway is secondary metabolite biosynthesis. It participates in phenylpropanoid metabolism; trans-cinnamate biosynthesis; trans-cinnamate from L-phenylalanine: step 1/1. Functionally, phenylalanine ammonia-lyase; part of the gene cluster that mediates the biosynthesis of squalestatin S1 (SQS1, also known as zaragozic acid A), a heavily oxidized fungal polyketide that offers potent cholesterol lowering activity by targeting squalene synthase (SS). SQS1 is composed of a 2,8-dioxobicyclic[3.2.1]octane-3,4,5-tricarboxyclic acid core that is connected to two lipophilic polyketide arms. These initial steps feature the priming of an unusual benzoic acid starter unit onto the highly reducing polyketide synthase clz14, followed by oxaloacetate extension and product release to generate a tricarboxylic acid containing product. The phenylalanine ammonia lyase (PAL) clz10 and the acyl-CoA ligase clz12 are involved in transforming phenylalanine into benzoyl-CoA. The citrate synthase-like protein clz17 is involved in connecting the C-alpha-carbons of the hexaketide chain and oxaloacetate to afford the tricarboxylic acid unit. The potential hydrolytic enzymes, clz11 and clz13, are in close proximity to pks2 and may participate in product release. On the other side, the tetraketide arm is synthesized by a the squalestatin tetraketide synthase clz2 and enzymatically esterified to the core in the last biosynthetic step, by the acetyltransferase clz6. The biosynthesis of the tetraketide must involve 3 rounds of chain extension. After the first and second rounds methyl-transfer occurs, and in all rounds of extension the ketoreductase and dehydratase are active. The enoyl reductase and C-MeT of clz2 are not active in the final round of extension. The acetyltransferase clz6 appears to have a broad substrate selectivity for its acyl CoA substrate, allowing the in vitro synthesis of novel squalestatins. The biosynthesis of SQS1 requires several oxidative steps likely performed by oxidoreductases clz3, clz15 and clz16. Finally, in support of the identification of the cluster as being responsible for SQS1 production, the cluster contains a gene encoding a putative squalene synthase (SS) clz20, suggesting a likely mechanism for self-resistance. This chain is Phenylalanine ammonia-lyase, found in Cochliobolus lunatus (Filamentous fungus).